The primary structure comprises 424 residues: Tyrosine--tRNA ligase (424 aa).

Residue Tyr-36 participates in L-tyrosine binding. The short motif at 41–50 (PTAPSLHAGH) is the 'HIGH' region element. Positions 171 and 175 each coordinate L-tyrosine. The short motif at 231–235 (KFGKS) is the 'KMSKS' region element. Lys-234 provides a ligand contact to ATP. The S4 RNA-binding domain maps to 356 to 413 (DGIVDLLVASGLSASKGAARRTIHEGGVSVNNIRVDNEEWVPQSSDFLHGRWLVLRRG).

It belongs to the class-I aminoacyl-tRNA synthetase family. TyrS type 1 subfamily. In terms of assembly, homodimer.

Its subcellular location is the cytoplasm. It carries out the reaction tRNA(Tyr) + L-tyrosine + ATP = L-tyrosyl-tRNA(Tyr) + AMP + diphosphate + H(+). Its function is as follows. Catalyzes the attachment of tyrosine to tRNA(Tyr) in a two-step reaction: tyrosine is first activated by ATP to form Tyr-AMP and then transferred to the acceptor end of tRNA(Tyr). The polypeptide is Tyrosine--tRNA ligase (Mycobacterium bovis (strain ATCC BAA-935 / AF2122/97)).